A 198-amino-acid polypeptide reads, in one-letter code: DnaJ homolog subfamily C member 5 (198 aa).

A phosphoserine mark is found at S8, S10, S12, and S15. The J domain maps to 13-82 (GESLYHVLGL…RNIYDKYGSL (70 aa)). Y17 carries the post-translational modification Phosphotyrosine. K56 carries the N6-acetyllysine modification. A Phosphoserine modification is found at S151.

Homodimer. Interacts with the chaperone complex consisting of HSC70 and SGTA. Interacts with ZDHHC13 (via ANK repeats). Interacts with ZDHHC17 (via ANK repeats). Interacts with SYT1, SYT5 and SYT7, and with SYT9, forming a complex with SNAP25. The interaction with SYT9 is stimulated tenfold in presence of calcium. Post-translationally, formation of the chaperone complex DNAJC5/HSC70 is not regulated by phosphorylation. Ser-10 phosphorylation induces an order-to-disorder transition triggering the interaction with Lys-58. This conformational switch modulates DNAJC5's cellular functions by reducing binding to syntaxin and synaptogamin without altering HSC70 interactions. In terms of processing, palmitoylated. Could be palmitoylated by DHHC3, DHHC7, DHHC15 and DHHC17. Palmitoylation occurs probably in the cysteine-rich domain and regulates DNAJC5 membrane attachment.

Its subcellular location is the cytoplasm. The protein resides in the cytosol. It localises to the membrane. It is found in the cytoplasmic vesicle. The protein localises to the secretory vesicle. Its subcellular location is the chromaffin granule membrane. The protein resides in the melanosome. It localises to the cell membrane. Its function is as follows. Acts as a co-chaperone for the SNARE protein SNAP-25. Involved in the calcium-mediated control of a late stage of exocytosis. Acts as a general chaperone in regulated exocytosis. May have an important role in presynaptic function. May be involved in calcium-dependent neurotransmitter release at nerve endings. In Mus musculus (Mouse), this protein is DnaJ homolog subfamily C member 5.